The chain runs to 468 residues: Interferon-induced protein with tetratricopeptide repeats 2 (468 aa).

An N-acetylserine modification is found at serine 2. 9 TPR repeats span residues alanine 51–valine 89, glutamate 90–serine 135, proline 136–asparagine 171, proline 172–serine 208, threonine 242–asparagine 275, alanine 276–aspartate 328, serine 329–threonine 359, proline 360–threonine 398, and lysine 399–glutamine 441. The segment at glutamine 441–glutamine 468 is disordered. Over residues valine 445–arginine 454 the composition is skewed to basic and acidic residues.

The protein belongs to the IFIT family. Domain-swapped homodimer. Component of an interferon-dependent multiprotein complex, at least composed of IFIT1, IFIT2 and IFIT3. Interacts with IFIT1 and IFIT3. Interacts with STING1/MITA and disrupts its interaction with MAVS or TBK1. Interacts with EIF3E and EIF3C.

Its subcellular location is the cytoplasm. The protein localises to the endoplasmic reticulum. Functionally, IFN-induced antiviral protein which inhibits expression of viral messenger RNAs lacking 2'-O-methylation of the 5' cap. The ribose 2'-O-methylation would provide a molecular signature to distinguish between self and non-self mRNAs by the host during viral infection. Viruses evolved several ways to evade this restriction system such as encoding their own 2'-O-methylase for their mRNAs or by stealing host cap containing the 2'-O-methylation (cap snatching mechanism). Binds AU-rich viral RNAs, with or without 5' triphosphorylation, RNA-binding is required for antiviral activity. Can promote apoptosis. This Cricetulus griseus (Chinese hamster) protein is Interferon-induced protein with tetratricopeptide repeats 2 (IFIT2).